A 1414-amino-acid polypeptide reads, in one-letter code: DNA-directed RNA polymerase subunit beta' (1414 aa).

Zn(2+)-binding residues include Cys-70, Cys-72, Cys-85, and Cys-88. The Mg(2+) site is built by Asp-460, Asp-462, and Asp-464. Residues Cys-815, Cys-889, Cys-896, and Cys-899 each contribute to the Zn(2+) site. The interval 1395-1414 is disordered; sequence EAEAQFADISSTPDSDTDAS.

It belongs to the RNA polymerase beta' chain family. The RNAP catalytic core consists of 2 alpha, 1 beta, 1 beta' and 1 omega subunit. When a sigma factor is associated with the core the holoenzyme is formed, which can initiate transcription. Mg(2+) serves as cofactor. Requires Zn(2+) as cofactor.

It catalyses the reaction RNA(n) + a ribonucleoside 5'-triphosphate = RNA(n+1) + diphosphate. Functionally, DNA-dependent RNA polymerase catalyzes the transcription of DNA into RNA using the four ribonucleoside triphosphates as substrates. The sequence is that of DNA-directed RNA polymerase subunit beta' from Herminiimonas arsenicoxydans.